The chain runs to 465 residues: MAFNDDNFMLKNEAAKRLYQQIKDQPIFDYHCHLDPKEIFEDKVYDNIVDLWLGGDHYKWRLMRANGISEEEITGSASKLDKFKAFARTLQRSYGNPVYHWSVMELKNVFGVCELLTEDNAEEIYHRINAYLVEHQISPRKLIADSRVRFIGTTDHPLDDLAWHKRLAADDTFETVVAPTFRPDEAFIEHQRFADFVARLAQATGRTITDFKSFIAAMEERIAYFAENGCKASDISFTEIVFEAAEPEQLDRLMTRVLEGYQPQPLEVKQWQTAVFAELCRLYKHYGFVTQVHFGALRNNHSAIFNKLGADVGVDSLGDQTGLAINMNRLLDHLVQRDSLPKMIWYNLNPSYNIAVANTLANFQANENGIAGYLQFGAGWWFADTKLGMISQMNALAEQGLLANFVGMLTDSRSFLSYQRHDYFRRILSTYLGEWIEEGEVPEDYQALGKMAQDIAYNNAIQYFN.

It belongs to the metallo-dependent hydrolases superfamily. Uronate isomerase family.

It catalyses the reaction D-glucuronate = D-fructuronate. The catalysed reaction is aldehydo-D-galacturonate = keto-D-tagaturonate. The protein operates within carbohydrate metabolism; pentose and glucuronate interconversion. The polypeptide is Uronate isomerase (Streptococcus equi subsp. equi (strain 4047)).